The primary structure comprises 1128 residues: Adipocyte enhancer-binding protein 1 (1128 aa).

The N-terminal stretch at 1–25 (MAAVRTASLLCGLLALLALCPEGSP) is a signal peptide. A disordered region spans residues 40 to 368 (GFLSEFETQS…PRKGEELEEE (329 aa)). Basic and acidic residues predominate over residues 77 to 109 (PRADAEAPPEKNKDKEKKGKKDKGPKAAKHLEG). Basic residues predominate over residues 113–163 (PTKKPKEKPPKATKKPKEKPPKATKKPKEKPPKATKKPKEKPPKATKRPSA). Composition is skewed to polar residues over residues 178 to 187 (RSLTSPSNPG) and 198 to 209 (TSLNTWQGQGEE). Basic residues predominate over residues 249-261 (RQKQPRPTPSRKR). Basic and acidic residues-rich tracts occupy residues 267–282 (PEEK…EVDP) and 327–363 (EELK…RKGE). Residues 375-532 (IKCPPIGMES…LCMRLEVLGC (158 aa)) form the F5/8 type C domain. Positions 382–547 (MESHRIEDNQ…YSYYAQNEVV (166 aa)) are required for DNA-binding and interaction with NFKBIA. 2 interaction with MAPK1 and MAPK3 regions span residues 413–616 (AGAN…TAGM) and 998–1128 (DPSR…FGDF). The N-linked (GlcNAc...) asparagine glycan is linked to Asn-520. Residues 547–977 (VTTDSLDFRH…TQCNFILARS (431 aa)) form an interaction with PTEN region. The 342-residue stretch at 555-896 (RHHSYKDMRQ…EALLTFMEQV (342 aa)) folds into the Peptidase M14 domain. Positions 933–1128 (DYWRILNPGE…ETYTVNFGDF (196 aa)) are required for transcriptional repression. The segment at 1027 to 1056 (LRRLNSTTGPATSPTPALTLPPSPTPGSTS) is disordered. A compositionally biased stretch (low complexity) spans 1030-1044 (LNSTTGPATSPTPAL).

The protein belongs to the peptidase M14 family. Interacts with different types of collagen, including collagens I, III, and V. Interacts with GNG5, NFKBIA, MAPK1, MAPK3 and PTEN. May interact with calmodulin. Interaction with MAPK1 may stimulate DNA-binding. Binds to DNA in vitro. Post-translationally, phosphorylated by MAPK1 in vitro. As to expression, expressed in aorta.

It localises to the secreted. Functionally, as a positive regulator of collagen fibrillogenesis, it is probably involved in the organization and remodeling of the extracellular matrix. May positively regulate MAP-kinase activity in adipocytes, leading to enhanced adipocyte proliferation and reduced adipocyte differentiation. May also positively regulate NF-kappa-B activity in macrophages by promoting the phosphorylation and subsequent degradation of I-kappa-B-alpha (NFKBIA), leading to enhanced macrophage inflammatory responsiveness. Can act as a transcriptional repressor. The sequence is that of Adipocyte enhancer-binding protein 1 (Aebp1) from Rattus norvegicus (Rat).